We begin with the raw amino-acid sequence, 184 residues long: dCTP deaminase (184 aa).

DCTP-binding positions include 107–112 (KSTYAR), 131–133 (TLE), Gln152, Tyr166, and Gln176. Glu133 acts as the Proton donor/acceptor in catalysis.

The protein belongs to the dCTP deaminase family. As to quaternary structure, homotrimer.

The enzyme catalyses dCTP + H2O + H(+) = dUTP + NH4(+). It functions in the pathway pyrimidine metabolism; dUMP biosynthesis; dUMP from dCTP (dUTP route): step 1/2. Catalyzes the deamination of dCTP to dUTP. The polypeptide is dCTP deaminase (Paramagnetospirillum magneticum (strain ATCC 700264 / AMB-1) (Magnetospirillum magneticum)).